We begin with the raw amino-acid sequence, 298 residues long: uncharacterized protein (298 aa).

Belongs to the glycosyltransferase 2 family.

This is an uncharacterized protein from Mycoplasma genitalium (strain ATCC 33530 / DSM 19775 / NCTC 10195 / G37) (Mycoplasmoides genitalium).